The following is a 212-amino-acid chain: Thymidylate kinase (212 aa).

10–17 (GPDGAGKT) is a binding site for ATP.

This sequence belongs to the thymidylate kinase family.

The enzyme catalyses dTMP + ATP = dTDP + ADP. Functionally, phosphorylation of dTMP to form dTDP in both de novo and salvage pathways of dTTP synthesis. The chain is Thymidylate kinase from Exiguobacterium sibiricum (strain DSM 17290 / CCUG 55495 / CIP 109462 / JCM 13490 / 255-15).